A 595-amino-acid chain; its full sequence is METYQEKIKQKLTVVPIEPGCYLMKDRNDQIIYVGKAKKLRNRLRSYFTGAHDAKTTRLVGEIRNFEFIVTSSETESLLLELNLIKQYQPRYNILLKDDKSYPFIKITKEKYPRLIVTRTVKKGSGKYFGPYPNAYSAQETKKLLDRIYPFRKCDKMPDKLCLYYHIGQCLGPCVYPVDLEKYAEMTKEITDFLNGEDKTILHNLEQKMQESSESLDFERAKEYRDLIQHIHNLNKKQKITSSDNTIRDVFGYSISKGWMCIQVFFIRQGNMIKRDATMIPLQQTEEEEFYTFIGQFYDLNQHILPKEVHVPKHLNKELIQSVVDTKIVQPLKGKKKDMVDLANHNAEVTLENKFELIAKDESRTVKAIEELGDVMGIQTPIRIEAFDNSNIQGVNPVSAMVSFIDGKPNKKGYRKYKIKTVDGPDDYKSMREVVRRRYTRVLNEGSPLPDLIIVDGGKGHMSGVIDVLENELGLDIPVAGLRKNDKHQTSEILYGEQAEVVPMKKNSQPFYLLQRIQDEVHRFAITFHRQTRQKTGLQSVLDTVDGIGAKRKTKLLRTFGSIKRMKEASVEDLKNSGLPQNVAENLHHALSNNS.

The GIY-YIG domain occupies 17–94 (IEPGCYLMKD…IKQYQPRYNI (78 aa)). The UVR domain occupies 199–234 (KTILHNLEQKMQESSESLDFERAKEYRDLIQHIHNL).

This sequence belongs to the UvrC family. In terms of assembly, interacts with UvrB in an incision complex.

The protein resides in the cytoplasm. The UvrABC repair system catalyzes the recognition and processing of DNA lesions. UvrC both incises the 5' and 3' sides of the lesion. The N-terminal half is responsible for the 3' incision and the C-terminal half is responsible for the 5' incision. In Staphylococcus saprophyticus subsp. saprophyticus (strain ATCC 15305 / DSM 20229 / NCIMB 8711 / NCTC 7292 / S-41), this protein is UvrABC system protein C.